Consider the following 459-residue polypeptide: Argininosuccinate lyase (459 aa).

Belongs to the lyase 1 family. Argininosuccinate lyase subfamily.

The protein resides in the cytoplasm. The catalysed reaction is 2-(N(omega)-L-arginino)succinate = fumarate + L-arginine. It functions in the pathway amino-acid biosynthesis; L-arginine biosynthesis; L-arginine from L-ornithine and carbamoyl phosphate: step 3/3. The protein is Argininosuccinate lyase of Prochlorococcus marinus (strain MIT 9215).